Consider the following 189-residue polypeptide: MDHSAHMGMSTHMGMSDMNHSTTMPPSHHHPTSSGSHESMMMPMTFYFGFKKVEVLFAGLVINTAGEMAGAFVAVFLLAMFYEGLKIAREGLLRKSQVSIRYNSMPVPGPNGTILMETHKTVGQQMLSFPHLLQTVLHIIQVVISYFLMLIFMTYNGYLCIAVAAGAGTGYFLFSWKKAVVVDITEHCH.

Topologically, residues 1–67 are extracellular; it reads MDHSAHMGMS…AGLVINTAGE (67 aa). Positions 13-18 match the Methionine segments (Mets) motif motif; sequence MGMSDM. The tract at residues 15 to 36 is disordered; sequence MSDMNHSTTMPPSHHHPTSSGS. Low complexity predominate over residues 20-36; the sequence is HSTTMPPSHHHPTSSGS. Residues 68 to 88 form a helical membrane-spanning segment; the sequence is MAGAFVAVFLLAMFYEGLKIA. Residues 89–131 lie on the Cytoplasmic side of the membrane; that stretch reads REGLLRKSQVSIRYNSMPVPGPNGTILMETHKTVGQQMLSFPH. T113 carries the post-translational modification Phosphothreonine. A helical membrane pass occupies residues 132-152; the sequence is LLQTVLHIIQVVISYFLMLIF. At 153 to 155 the chain is on the extracellular side; that stretch reads MTY. Residues 156-176 traverse the membrane as a helical segment; it reads NGYLCIAVAAGAGTGYFLFSW. Residues 177–189 lie on the Cytoplasmic side of the membrane; sequence KKAVVVDITEHCH. C188 is subject to Cysteine sulfenic acid (-SOH).

This sequence belongs to the copper transporter (Ctr) (TC 1.A.56) family. SLC31A subfamily. As to quaternary structure, homotrimer; is stabilized by cisplatin via interactions between cisplatin and the methionine-rich clusters, and could be crucial for the copper(2+) reduction process and copper(1+) stabilization. Heterotrimer between SLC31A1, CCS and SOD1; this heterotrimer is copper(1+)-mediated and its maintenance is regulated through SOD1 activation. Interacts with KDR; this interaction is induced upon VEGFA stimulation leading to SLC31A1 and KDR subsequent co-internalization to early endosomes, thereby activating KDR downstream signaling in endothelial cells. Interacts (via C-terminal domain) with ATOX1 (via dimer form); this interaction improves ATOX1 stability and controls intracellular copper(1+) levels. Interacts with SLC31A2; this interaction stabilizes SLC31A2 and protects its from ubiquitination and degradation. Interacts (via C-terminal domain) with CCS; this interaction is copper(1+)-mediated. Proteolytic cleavage, leading to a truncated form, is facilitated by SLC31A2 and initiated preferentially by CTSL and to a minor extend by CTSB in endolysosomal compartments. A post-CTSL/cathepsin L processing occurs to yield to the fully truncated form. Post-translationally, sulfenylated at Cys-188 after stimulation with VEGFA, which induces SLC31A1-KDR disulfide bond formation and their co-internalization to early endosomes, driving to a sustained VEGFR2 signaling.

The protein resides in the cell membrane. It localises to the early endosome membrane. It is found in the recycling endosome membrane. Its subcellular location is the apical cell membrane. The protein localises to the late endosome membrane. The protein resides in the basolateral cell membrane. The catalysed reaction is Ag(+)(out) = Ag(+)(in). It carries out the reaction Cu(+)(out) = Cu(+)(in). Its function is as follows. Uniporter that mediates the transport of copper(1+) from the extracellular space to the cytoplasm, across the plasma membrane and delivers directly copper(1+) to specific chaperone such as ATOX1, via a copper(1+)- mediated transient interaction between the C-terminal domain and a copper(1+) chaperone, thus controlling intracellular copper(1+) levels. May function in copper(1+) import from the apical membrane thus may drive intestinal copper absorption. The copper(1+) transport mechanism is sodium-independent, saturable and of high-affinity. Also mediates the uptake of silver(1+). May function in the influx of the platinum-containing chemotherapeutic agents. The platinum-containing chemotherapeutic agents uptake is saturable. In vitro, mediates the transport of cadmium(2+) into cells. Also participates in the first step of copper(2+) acquisition by cells through a direct transfer of copper(2+) from copper(2+) carriers in blood, such as ALB to the N-terminal domain of SLC31A1, leading to copper(2+) reduction and probably followed by copper(1+) stabilization. In addition, functions as a redox sensor to promote angiogenesis in endothelial cells, in a copper(1+) transport independent manner, by transmitting the VEGF-induced ROS signal through a sulfenylation at Cys-189 leadin g to a subsequent disulfide bond formation between SLC31A1 and KDR. The SLC31A1-KDR complex is then co-internalized to early endosomes, driving a sustained VEGFR2 signaling. Functionally, mobilizes copper(1+) out of the endosomal compartment, making copper(1+) available for export out of the cells. The polypeptide is High affinity copper uptake protein 1 (Sus scrofa (Pig)).